Here is a 371-residue protein sequence, read N- to C-terminus: Cathepsin L1 (371 aa).

The first 48 residues, methionine 1 to alanine 48, serve as a signal peptide directing secretion. The propeptide at valine 49–threonine 153 is activation peptide. A glycan (N-linked (GlcNAc...) asparagine) is linked at asparagine 127. 3 disulfide bridges follow: cysteine 175–cysteine 218, cysteine 209–cysteine 251, and cysteine 310–cysteine 360. Cysteine 178 is a catalytic residue. Histidine 317 is an active-site residue. Positions aspartate 327 to serine 329 are excised as a propeptide. The active site involves asparagine 338.

This sequence belongs to the peptidase C1 family. As to quaternary structure, dimer of a heavy and a light chain linked by disulfide bonds. In the embryo, predominantly expressed in the midgut. Also expressed in larval alimentary organs such as salivary gland and midgut including gastric caeca.

The protein localises to the lysosome. The catalysed reaction is Specificity close to that of papain. As compared to cathepsin B, cathepsin L exhibits higher activity toward protein substrates, but has little activity on Z-Arg-Arg-NHMec, and no peptidyl-dipeptidase activity.. In terms of biological role, important for the overall degradation of proteins in lysosomes. Essential for adult male and female fertility. May play a role in digestion. This chain is Cathepsin L1, found in Drosophila melanogaster (Fruit fly).